A 317-amino-acid polypeptide reads, in one-letter code: Ribosomal protein L11 methyltransferase (317 aa).

Residues threonine 158, glycine 179, aspartate 201, and asparagine 244 each coordinate S-adenosyl-L-methionine.

It belongs to the methyltransferase superfamily. PrmA family.

The protein localises to the cytoplasm. It catalyses the reaction L-lysyl-[protein] + 3 S-adenosyl-L-methionine = N(6),N(6),N(6)-trimethyl-L-lysyl-[protein] + 3 S-adenosyl-L-homocysteine + 3 H(+). In terms of biological role, methylates ribosomal protein L11. The polypeptide is Ribosomal protein L11 methyltransferase (Lactococcus lactis subsp. lactis (strain IL1403) (Streptococcus lactis)).